The sequence spans 410 residues: UDP-N-acetylglucosamine--N-acetylmuramyl-(pentapeptide) pyrophosphoryl-undecaprenol N-acetylglucosamine transferase (410 aa).

The tract at residues 1 to 35 is disordered; the sequence is MKDTVSQPAGGRGATAPRPADAASPSCGSSPSADS. The segment covering 14 to 35 has biased composition (low complexity); the sequence is ATAPRPADAASPSCGSSPSADS. UDP-N-acetyl-alpha-D-glucosamine-binding positions include 45 to 47, asparagine 167, arginine 204, serine 238, and glutamine 334; that span reads TAG.

It belongs to the glycosyltransferase 28 family. MurG subfamily.

The protein resides in the cell membrane. The enzyme catalyses di-trans,octa-cis-undecaprenyl diphospho-N-acetyl-alpha-D-muramoyl-L-alanyl-D-glutamyl-meso-2,6-diaminopimeloyl-D-alanyl-D-alanine + UDP-N-acetyl-alpha-D-glucosamine = di-trans,octa-cis-undecaprenyl diphospho-[N-acetyl-alpha-D-glucosaminyl-(1-&gt;4)]-N-acetyl-alpha-D-muramoyl-L-alanyl-D-glutamyl-meso-2,6-diaminopimeloyl-D-alanyl-D-alanine + UDP + H(+). The protein operates within cell wall biogenesis; peptidoglycan biosynthesis. Cell wall formation. Catalyzes the transfer of a GlcNAc subunit on undecaprenyl-pyrophosphoryl-MurNAc-pentapeptide (lipid intermediate I) to form undecaprenyl-pyrophosphoryl-MurNAc-(pentapeptide)GlcNAc (lipid intermediate II). The chain is UDP-N-acetylglucosamine--N-acetylmuramyl-(pentapeptide) pyrophosphoryl-undecaprenol N-acetylglucosamine transferase from Mycobacterium tuberculosis (strain ATCC 25177 / H37Ra).